The chain runs to 348 residues: Rhodopsin (348 aa).

Methionine 1 carries the N-acetylmethionine modification. Residues 1–36 (MNGTEGPNFYVPFSNITGVVRSPFEQPQYYLAEPWQ) are Extracellular-facing. N-linked (GlcNAc...) asparagine glycans are attached at residues asparagine 2 and asparagine 15. A helical membrane pass occupies residues 37 to 61 (FSMLAAYMFLLIVLGFPINFLTLYV). Residues 62–73 (TVQHKKLRTPLN) are Cytoplasmic-facing. The chain crosses the membrane as a helical span at residues 74–96 (YILLNLAVADLFMVFGGFTTTLY). The Extracellular portion of the chain corresponds to 97–110 (TSLHGYFVFGPTGC). An intrachain disulfide couples cysteine 110 to cysteine 187. Residues 111-133 (NLEGFFATLGGEIGLWSLVVLAI) traverse the membrane as a helical segment. The short motif at 134–136 (ERY) is the 'Ionic lock' involved in activated form stabilization element. The Cytoplasmic segment spans residues 134-152 (ERYVVVCKPMSNFRFGENH). A helical transmembrane segment spans residues 153 to 173 (AIMGVAFTWVMALACAAPPLV). The Extracellular portion of the chain corresponds to 174–202 (GWSRYIPEGMQCSCGIDYYTLKPEVNNES). Glutamate 201 lines the Zn(2+) pocket. The helical transmembrane segment at 203 to 224 (FVIYMFVVHFTIPMIVIFFCYG) threads the bilayer. Residues 225 to 252 (QLVFTVKEAAAQQQESATTQKAEKEVTR) are Cytoplasmic-facing. Residues 253 to 274 (MVIIMVIFFLICWLPYASVAMY) form a helical membrane-spanning segment. At 275–286 (IFTHQGSNFGPI) the chain is on the extracellular side. Glutamine 279 is a binding site for Zn(2+). Residues 287–308 (FMTLPAFFAKTASIYNPIIYIM) traverse the membrane as a helical segment. At lysine 296 the chain carries N6-(retinylidene)lysine. Over 309–348 (MNKQFRNCMLTSLCCGKNPLGDDEASATASKTETSQVAPA) the chain is Cytoplasmic. S-palmitoyl cysteine attachment occurs at residues cysteine 322 and cysteine 323. An interaction with SAG region spans residues 330–348 (DDEASATASKTETSQVAPA). Serine 334 bears the Phosphoserine mark. The residue at position 336 (threonine 336) is a Phosphothreonine. Residue serine 338 is modified to Phosphoserine. Threonine 340 and threonine 342 each carry phosphothreonine. Serine 343 carries the post-translational modification Phosphoserine.

It belongs to the G-protein coupled receptor 1 family. Opsin subfamily. As to quaternary structure, homodimer. May form a complex composed of RHO, GRK1 and RCVRN in a Ca(2+)-dependent manner; RCVRN prevents the interaction between GRK1 and RHO. Interacts with GRK1. Interacts (phosphorylated form) with SAG. Interacts with GNAT1. Interacts with GNAT3. SAG and G-proteins compete for a common binding site. Interacts with PRCD; the interaction promotes PRCD stability. Forms a complex with ASAP1 and ARF4. Forms a complex with ASAP1, RAB11A, Rabin8/RAB3IP, ARF4 and RAB11FIP3; the complex regulates Golgi-to-cilia rhodopsin/RHO transport in photoreceptors. In terms of processing, phosphorylated on some or all of the serine and threonine residues present in the C-terminal region. Contains one covalently linked retinal chromophore. Upon light absorption, the covalently bound 11-cis-retinal is converted to all-trans-retinal. After hydrolysis of the Schiff base and release of the covalently bound all-trans-retinal, active rhodopsin is regenerated by binding of a fresh molecule of 11-cis-retinal.

The protein resides in the membrane. It is found in the cell projection. The protein localises to the cilium. It localises to the photoreceptor outer segment. Functionally, photoreceptor required for image-forming vision at low light intensity. Required for photoreceptor cell viability after birth. Light-induced isomerization of 11-cis to all-trans retinal triggers a conformational change that activates signaling via G-proteins. Subsequent receptor phosphorylation mediates displacement of the bound G-protein alpha subunit by the arrestin SAG and terminates signaling. This Rattus norvegicus (Rat) protein is Rhodopsin (Rho).